The sequence spans 513 residues: ATP synthase subunit alpha (513 aa).

ATP is bound at residue 169 to 176 (GDRQTGKT).

The protein belongs to the ATPase alpha/beta chains family. As to quaternary structure, F-type ATPases have 2 components, CF(1) - the catalytic core - and CF(0) - the membrane proton channel. CF(1) has five subunits: alpha(3), beta(3), gamma(1), delta(1), epsilon(1). CF(0) has three main subunits: a(1), b(2) and c(9-12). The alpha and beta chains form an alternating ring which encloses part of the gamma chain. CF(1) is attached to CF(0) by a central stalk formed by the gamma and epsilon chains, while a peripheral stalk is formed by the delta and b chains.

The protein resides in the cell inner membrane. The catalysed reaction is ATP + H2O + 4 H(+)(in) = ADP + phosphate + 5 H(+)(out). Functionally, produces ATP from ADP in the presence of a proton gradient across the membrane. The alpha chain is a regulatory subunit. The protein is ATP synthase subunit alpha of Yersinia enterocolitica serotype O:8 / biotype 1B (strain NCTC 13174 / 8081).